The chain runs to 626 residues: Miltiradiene synthase KSL1, chloroplastic (626 aa).

The N-terminal 51 residues, 1 to 51, are a transit peptide targeting the chloroplast; sequence MSLAFNLRVIPFSGHTIQSRRGLFPVHESPMITTKPFAAVKCSLTTSTDLM. Residues aspartate 329, aspartate 333, asparagine 473, and glutamate 481 each contribute to the Mg(2+) site. The DDXXD motif signature appears at 329–333; it reads DDFFD.

This sequence belongs to the terpene synthase family. The cofactor is Mg(2+). In terms of tissue distribution, highly expressed in roots, and, at low levels, in stems and leaves.

Its subcellular location is the plastid. It localises to the chloroplast. The enzyme catalyses (+)-copalyl diphosphate = miltiradiene + diphosphate. It functions in the pathway secondary metabolite biosynthesis; terpenoid biosynthesis. Its function is as follows. Involved in the biosynthesis of ent-kaurene diterpenoids natural products such as oridonin, miltiradiene, eriocalyxin B and nezukol, known to exhibit antitumor, anti-inflammatory and antibacterial activities. Catalyzes the conversion of (+)-copalyl diphosphate ((+)-CPP) to miltiradiene. The polypeptide is Miltiradiene synthase KSL1, chloroplastic (Isodon rubescens (Rabdosia rubescens)).